Here is a 209-residue protein sequence, read N- to C-terminus: Streptogramin A acetyltransferase (209 aa).

Residue His82 is part of the active site.

The protein belongs to the transferase hexapeptide repeat family. Homohexamer.

In terms of biological role, inactivates the A compounds of streptogramin antibiotics by acetylation, thus providing resistance to these antibiotics. The polypeptide is Streptogramin A acetyltransferase (vatD) (Enterococcus faecium (Streptococcus faecium)).